A 93-amino-acid chain; its full sequence is Pyrimidine/purine nucleoside phosphorylase (93 aa).

This sequence belongs to the nucleoside phosphorylase PpnP family.

The catalysed reaction is a purine D-ribonucleoside + phosphate = a purine nucleobase + alpha-D-ribose 1-phosphate. It catalyses the reaction adenosine + phosphate = alpha-D-ribose 1-phosphate + adenine. It carries out the reaction cytidine + phosphate = cytosine + alpha-D-ribose 1-phosphate. The enzyme catalyses guanosine + phosphate = alpha-D-ribose 1-phosphate + guanine. The catalysed reaction is inosine + phosphate = alpha-D-ribose 1-phosphate + hypoxanthine. It catalyses the reaction thymidine + phosphate = 2-deoxy-alpha-D-ribose 1-phosphate + thymine. It carries out the reaction uridine + phosphate = alpha-D-ribose 1-phosphate + uracil. The enzyme catalyses xanthosine + phosphate = alpha-D-ribose 1-phosphate + xanthine. Catalyzes the phosphorolysis of diverse nucleosides, yielding D-ribose 1-phosphate and the respective free bases. Can use uridine, adenosine, guanosine, cytidine, thymidine, inosine and xanthosine as substrates. Also catalyzes the reverse reactions. In Vibrio vulnificus (strain CMCP6), this protein is Pyrimidine/purine nucleoside phosphorylase.